The following is a 130-amino-acid chain: Small ribosomal subunit protein uS8 (130 aa).

This sequence belongs to the universal ribosomal protein uS8 family. Part of the 30S ribosomal subunit. Contacts proteins S5 and S12.

One of the primary rRNA binding proteins, it binds directly to 16S rRNA central domain where it helps coordinate assembly of the platform of the 30S subunit. The sequence is that of Small ribosomal subunit protein uS8 from Hahella chejuensis (strain KCTC 2396).